The chain runs to 209 residues: Kynurenine formamidase (209 aa).

W20 is a substrate binding site. Residues H50, H54, and D56 each coordinate Zn(2+). H60 (proton donor/acceptor) is an active-site residue. Residues H161 and E173 each coordinate Zn(2+).

Belongs to the Cyclase 1 superfamily. KynB family. In terms of assembly, homodimer. It depends on Zn(2+) as a cofactor.

It catalyses the reaction N-formyl-L-kynurenine + H2O = L-kynurenine + formate + H(+). Its pathway is amino-acid degradation; L-tryptophan degradation via kynurenine pathway; L-kynurenine from L-tryptophan: step 2/2. Functionally, catalyzes the hydrolysis of N-formyl-L-kynurenine to L-kynurenine, the second step in the kynurenine pathway of tryptophan degradation. This Bacillus cereus (strain ZK / E33L) protein is Kynurenine formamidase.